Here is a 372-residue protein sequence, read N- to C-terminus: NAD(P)H-quinone oxidoreductase subunit 1, chloroplastic (372 aa).

Transmembrane regions (helical) follow at residues 28-48, 65-85, 97-117, 128-148, 166-186, 254-274, 312-332, and 352-372; these read IWIC…VLVI, PEYA…KLIL, WLFT…YLVV, IGIG…GLLI, AAQA…IILM, FGLF…FVSV, GIIG…LAVL, and FLLP…ITLL.

The protein belongs to the complex I subunit 1 family. As to quaternary structure, NDH is composed of at least 16 different subunits, 5 of which are encoded in the nucleus.

It is found in the plastid. Its subcellular location is the chloroplast thylakoid membrane. The enzyme catalyses a plastoquinone + NADH + (n+1) H(+)(in) = a plastoquinol + NAD(+) + n H(+)(out). The catalysed reaction is a plastoquinone + NADPH + (n+1) H(+)(in) = a plastoquinol + NADP(+) + n H(+)(out). Its function is as follows. NDH shuttles electrons from NAD(P)H:plastoquinone, via FMN and iron-sulfur (Fe-S) centers, to quinones in the photosynthetic chain and possibly in a chloroplast respiratory chain. The immediate electron acceptor for the enzyme in this species is believed to be plastoquinone. Couples the redox reaction to proton translocation, and thus conserves the redox energy in a proton gradient. This Staurastrum punctulatum (Green alga) protein is NAD(P)H-quinone oxidoreductase subunit 1, chloroplastic.